The following is a 177-amino-acid chain: ECF RNA polymerase sigma factor SigL (177 aa).

The tract at residues 18–85 (LYDEHAAVLW…MIIDERRSAR (68 aa)) is sigma-70 factor domain-2. Positions 42–45 (DVVQ) match the Interaction with polymerase core subunit RpoC motif. The tract at residues 119–167 (ALAQLSAEHRAVIQRSYYRGWSTAQIATDLGIAEGTVKSRLHYAVRALR) is sigma-70 factor domain-4. The segment at residues 141 to 160 (TAQIATDLGIAEGTVKSRLH) is a DNA-binding region (H-T-H motif).

This sequence belongs to the sigma-70 factor family. ECF subfamily. Interacts transiently with the RNA polymerase catalytic core formed by RpoA, RpoB, RpoC and RpoZ (2 alpha, 1 beta, 1 beta' and 1 omega subunit) to form the RNA polymerase holoenzyme that can initiate transcription. Interacts (via sigma-70 factor domain 4) with anti-sigma-L factor RslA.

Functionally, sigma factors are initiation factors that promote the attachment of RNA polymerase to specific initiation sites and are then released. Extracytoplasmic function (ECF) sigma factors are held in an inactive form by an anti-sigma factor until released by regulated intramembrane proteolysis. This Mycobacterium tuberculosis (strain ATCC 35801 / TMC 107 / Erdman) protein is ECF RNA polymerase sigma factor SigL (sigL).